The primary structure comprises 383 residues: Chaperone protein DnaJ (383 aa).

The 66-residue stretch at 5–70 (DYYDVLGVSK…DKKAAYDRYG (66 aa)) folds into the J domain. The segment at 142 to 220 (GMQKTISVPG…CRGAGREEKT (79 aa)) adopts a CR-type zinc-finger fold. The Zn(2+) site is built by C155, C158, C172, C175, C194, C197, C208, and C211. CXXCXGXG motif repeat units lie at residues 155 to 162 (CSACEGTG), 172 to 179 (CPTCSGMG), 194 to 201 (CPTCSGMG), and 208 to 215 (CQACRGAG).

Belongs to the DnaJ family. In terms of assembly, homodimer. Zn(2+) serves as cofactor.

It is found in the cytoplasm. Functionally, participates actively in the response to hyperosmotic and heat shock by preventing the aggregation of stress-denatured proteins and by disaggregating proteins, also in an autonomous, DnaK-independent fashion. Unfolded proteins bind initially to DnaJ; upon interaction with the DnaJ-bound protein, DnaK hydrolyzes its bound ATP, resulting in the formation of a stable complex. GrpE releases ADP from DnaK; ATP binding to DnaK triggers the release of the substrate protein, thus completing the reaction cycle. Several rounds of ATP-dependent interactions between DnaJ, DnaK and GrpE are required for fully efficient folding. Also involved, together with DnaK and GrpE, in the DNA replication of plasmids through activation of initiation proteins. This is Chaperone protein DnaJ from Dinoroseobacter shibae (strain DSM 16493 / NCIMB 14021 / DFL 12).